The chain runs to 458 residues: Cysteine--tRNA ligase (458 aa).

Cys-29 provides a ligand contact to Zn(2+). The short motif at 31 to 41 is the 'HIGH' region element; the sequence is MTVYDLCHLGH. Zn(2+)-binding residues include Cys-213, His-238, and Glu-242. Positions 270 to 274 match the 'KMSKS' region motif; the sequence is KMSKS. Lys-273 contacts ATP.

The protein belongs to the class-I aminoacyl-tRNA synthetase family. As to quaternary structure, monomer. It depends on Zn(2+) as a cofactor.

It is found in the cytoplasm. It catalyses the reaction tRNA(Cys) + L-cysteine + ATP = L-cysteinyl-tRNA(Cys) + AMP + diphosphate. This is Cysteine--tRNA ligase from Acidovorax sp. (strain JS42).